A 104-amino-acid polypeptide reads, in one-letter code: Protein enhancer of rudimentary (104 aa).

Position 18 is a phosphothreonine; by CK2 (Thr18). Ser24 bears the Phosphoserine; by CK2 mark.

It belongs to the E(R) family.

Acts as an enhancer of the rudimentary gene. Has a role in pyrimidine biosynthesis and the cell cycle. This is Protein enhancer of rudimentary (e(r)) from Drosophila virilis (Fruit fly).